We begin with the raw amino-acid sequence, 204 residues long: Large ribosomal subunit protein uL4 (204 aa).

The interval 49 to 75 (TKGRSDVSGGGKKPWRQKGRGGARAGS) is disordered.

Belongs to the universal ribosomal protein uL4 family. In terms of assembly, part of the 50S ribosomal subunit.

Its function is as follows. One of the primary rRNA binding proteins, this protein initially binds near the 5'-end of the 23S rRNA. It is important during the early stages of 50S assembly. It makes multiple contacts with different domains of the 23S rRNA in the assembled 50S subunit and ribosome. Functionally, forms part of the polypeptide exit tunnel. The polypeptide is Large ribosomal subunit protein uL4 (Campylobacter jejuni (strain RM1221)).